The following is a 604-amino-acid chain: Prostaglandin G/H synthase 2 (604 aa).

A signal peptide spans 1–17; sequence MLARAGLLCASLSPPHA. The region spanning 18-55 is the EGF-like domain; it reads ANPCCSNPCQNQGVCMSIGFDQYMCDCSRTGFYGENCS. 4 disulfides stabilise this stretch: Cys-21/Cys-32, Cys-22/Cys-145, Cys-26/Cys-42, and Cys-44/Cys-54. Asn-53 carries an N-linked (GlcNAc...) asparagine glycan. A substrate-binding site is contributed by Arg-106. N-linked (GlcNAc...) asparagine glycosylation occurs at Asn-130. His-193 functions as the Proton acceptor in the catalytic mechanism. Position 341 (Tyr-341) interacts with substrate. Tyr-371 acts as the For cyclooxygenase activity in catalysis. His-374 is a binding site for heme b. N-linked (GlcNAc...) asparagine glycosylation is present at Asn-396. Cys-526 carries the post-translational modification S-nitrosocysteine. The cysteines at positions 555 and 561 are disulfide-linked. N-linked (GlcNAc...) asparagine glycosylation is present at Asn-580.

This sequence belongs to the prostaglandin G/H synthase family. In terms of assembly, homodimer. Heme b serves as cofactor. In terms of processing, S-nitrosylation by NOS2 (iNOS) activates enzyme activity. S-nitrosylation may take place on different Cys residues in addition to Cys-526.

The protein localises to the microsome membrane. It is found in the endoplasmic reticulum membrane. It localises to the nucleus inner membrane. The protein resides in the nucleus outer membrane. It catalyses the reaction (5Z,8Z,11Z,14Z)-eicosatetraenoate + AH2 + 2 O2 = prostaglandin H2 + A + H2O. The enzyme catalyses (5Z,8Z,11Z,14Z)-eicosatetraenoate + 2 O2 = prostaglandin G2. The catalysed reaction is prostaglandin G2 + AH2 = prostaglandin H2 + A + H2O. It carries out the reaction (5Z,8Z,11Z,14Z,17Z)-eicosapentaenoate + 2 O2 = prostaglandin G3. It catalyses the reaction prostaglandin G3 + AH2 = prostaglandin H3 + A + H2O. The enzyme catalyses (8Z,11Z,14Z)-eicosatrienoate + 2 O2 = prostaglandin G1. The catalysed reaction is prostaglandin G1 + AH2 = prostaglandin H1 + A + H2O. It carries out the reaction 2-(5Z,8Z,11Z,14Z)-eicosatetraenoyl-sn-glycero-3-phosphoethanolamine + 2 O2 = 2-(prostaglandin G2)-sn-glycero-3-phosphoethanolamine. It catalyses the reaction 2-(prostaglandin G2)-sn-glycero-3-phosphoethanolamine + AH2 = 2-(prostaglandin H2)-sn-glycero-3-phosphoethanolamine + A + H2O. The enzyme catalyses 2-(5Z,8Z,11Z,14Z)-eicosatetraenoyl-sn-glycero-3-phosphocholine + 2 O2 = 2-(prostaglandin G2)-sn-glycero-3-phosphocholine. The catalysed reaction is 2-(prostaglandin G2)-sn-glycero-3-phosphocholine + AH2 = 2-(prostaglandin H2)-sn-glycero-3-phosphocholine + A + H2O. It carries out the reaction (15S)-hydroperoxy-(5Z,8Z,11Z,13E)-eicosatetraenoate + AH2 = (15S)-hydroxy-(5Z,8Z,11Z,13E)-eicosatetraenoate + A + H2O. It catalyses the reaction 2-(5Z,8Z,11Z,14Z)-eicosatetraenoyl-sn-glycero-3-phosphocholine + AH2 + O2 = 2-[(15S)-hydroxy-(5Z,8Z,11Z,13E)-eicosatetraenoyl]-sn-glycero-3-phosphocholine + A + H2O. The enzyme catalyses 2-(5Z,8Z,11Z,14Z)-eicosatetraenoyl-sn-glycero-3-phosphocholine + AH2 + O2 = 2-[(15R)-hydroxy-(5Z,8Z,11Z,13E)-eicosatetraenoyl]-sn-glycero-3-phosphocholine + A + H2O. The catalysed reaction is 2-(5Z,8Z,11Z,14Z)-eicosatetraenoyl-sn-glycero-3-phosphocholine + AH2 + O2 = 2-[(11R)-hydroxy-(5Z,8Z,12E,14Z)-eicosatetraenoyl]-sn-glycero-3-phosphocholine + A + H2O. It carries out the reaction (9Z,12Z)-octadecadienoate + AH2 + O2 = 9-hydroxy-(10E,12Z)-octadecadienoate + A + H2O. It catalyses the reaction (9Z,12Z)-octadecadienoate + AH2 + O2 = 13-hydroxy-(9Z,11E)-octadecadienoate + A + H2O. The enzyme catalyses (5Z,8Z,11Z,14Z)-eicosatetraenoate + AH2 + O2 = (15R)-hydroxy-(5Z,8Z,11Z,13E)-eicosatetraenoate + A + H2O. The catalysed reaction is (5Z,8Z,11Z,14Z)-eicosatetraenoate + AH2 + O2 = (11R)-hydroxy-(5Z,8Z,12E,14Z)-eicosatetraenoate + A + H2O. It carries out the reaction (5Z,8Z,11Z,14Z,17Z)-eicosapentaenoate + AH2 + O2 = (11R)-hydroxy-(5Z,8Z,12E,14Z,17Z)-eicosapentaenoate + A + H2O. It catalyses the reaction (5Z,8Z,11Z,14Z,17Z)-eicosapentaenoate + AH2 + O2 = (18S)-hydroxy-(5Z,8Z,11Z,14Z,16E)-eicosapentaenoate + A + H2O. The enzyme catalyses (5Z,8Z,11Z,14Z,17Z)-eicosapentaenoate + AH2 + O2 = (18R)-hydroxy-(5Z,8Z,11Z,14Z,16E)-eicosapentaenoate + A + H2O. The catalysed reaction is (5Z,8Z,11Z,14Z,17Z)-eicosapentaenoate + AH2 + O2 = (15R)-hydroxy-(5Z,8Z,11Z,13E,17Z)-eicosapentaenoate + A + H2O. It carries out the reaction (5Z,8Z,11Z,14Z,17Z)-eicosapentaenoate + AH2 + O2 = (15S)-hydroxy-(5Z,8Z,11Z,13E,17Z)-eicosapentaenoate + A + H2O. It catalyses the reaction (7Z,10Z,13Z,16Z,19Z)-docosapentaenoate + AH2 + O2 = 13R-hydroxy-(7Z,10Z,14E,16Z,19Z)-docosapentaenoate + A + H2O. The enzyme catalyses (4Z,7Z,10Z,13Z,16Z,19Z)-docosahexaenoate + AH2 + O2 = 13-hydroxy-(4Z,7Z,10Z,14E,16Z,19Z)-docosahexaenoate + A + H2O. The catalysed reaction is (5S)-hydroxy-(6E,8Z,11Z,14Z)-eicosatetraenoate + AH2 + O2 = (5S,15R)-dihydroxy-(6E,8Z,11Z,13E)-eicosatetraenoate + A + H2O. It carries out the reaction (4Z,7Z,10Z,13Z,16Z,19Z)-docosahexaenoate + AH2 + O2 = 17R-hydroxy-(4Z,7Z,10Z,13Z,15E,19Z)-docosahexaenoate + A + H2O. It catalyses the reaction (5S)-hydroxy-(6E,8Z,11Z,14Z)-eicosatetraenoate + AH2 + O2 = (5S,15S)-dihydroxy-(6E,8Z,11Z,13E)-eicosatetraenoate + A + H2O. The enzyme catalyses (5S)-hydroxy-(6E,8Z,11Z,14Z)-eicosatetraenoate + AH2 + O2 = (5S,11R)-dihydroxy-(6E,8Z,12E,14Z)-eicosatetraenoate + A + H2O. The catalysed reaction is 2-(5Z,8Z,11Z,14Z-eicosatetraenoyl)-glycerol + 2 O2 = 2-glyceryl-prostaglandin G2. It carries out the reaction 2-glyceryl-prostaglandin G2 + AH2 = 2-glyceryl-prostaglandin H2 + A + H2O. It catalyses the reaction (5Z,8Z,11Z,14Z)-eicosatetraenoate + O2 = (15R)-hydroperoxy-(5Z,8Z,11Z,13E)-eicosatetraenoate. The enzyme catalyses (5Z,8Z,11Z,14Z)-eicosatetraenoate + O2 = 11R-hydroperoxy-(5Z,8Z,12E,14Z)-eicosatetraenoate. The catalysed reaction is (9Z,12Z)-octadecadienoate + AH2 + O2 = (9R)-hydroxy-(10E,12Z)-octadecadienoate + A + H2O. It carries out the reaction (9Z,12Z)-octadecadienoate + AH2 + O2 = (9S)-hydroxy-(10E,12Z)-octadecadienoate + A + H2O. It catalyses the reaction (9Z,12Z)-octadecadienoate + AH2 + O2 = (13S)-hydroxy-(9Z,11E)-octadecadienoate + A + H2O. The enzyme catalyses (9Z,12Z)-octadecadienoate + AH2 + O2 = (13R)-hydroxy-(9Z,11E)-octadecadienoate + A + H2O. Its pathway is lipid metabolism; prostaglandin biosynthesis. Its function is as follows. Dual cyclooxygenase and peroxidase in the biosynthesis pathway of prostanoids, a class of C20 oxylipins mainly derived from arachidonate ((5Z,8Z,11Z,14Z)-eicosatetraenoate, AA, C20:4(n-6)), with a particular role in the inflammatory response. The cyclooxygenase activity oxygenates AA to the hydroperoxy endoperoxide prostaglandin G2 (PGG2), and the peroxidase activity reduces PGG2 to the hydroxy endoperoxide prostaglandin H2 (PGH2), the precursor of all 2-series prostaglandins and thromboxanes. This complex transformation is initiated by abstraction of hydrogen at carbon 13 (with S-stereochemistry), followed by insertion of molecular O2 to form the endoperoxide bridge between carbon 9 and 11 that defines prostaglandins. The insertion of a second molecule of O2 (bis-oxygenase activity) yields a hydroperoxy group in PGG2 that is then reduced to PGH2 by two electrons. Similarly catalyzes successive cyclooxygenation and peroxidation of dihomo-gamma-linoleate (DGLA, C20:3(n-6)) and eicosapentaenoate (EPA, C20:5(n-3)) to corresponding PGH1 and PGH3, the precursors of 1- and 3-series prostaglandins. In an alternative pathway of prostanoid biosynthesis, converts 2-arachidonoyl lysophopholipids to prostanoid lysophopholipids, which are then hydrolyzed by intracellular phospholipases to release free prostanoids. Metabolizes 2-arachidonoyl glycerol yielding the glyceryl ester of PGH2, a process that can contribute to pain response. Generates lipid mediators from n-3 and n-6 polyunsaturated fatty acids (PUFAs) via a lipoxygenase-type mechanism. Oxygenates PUFAs to hydroperoxy compounds and then reduces them to corresponding alcohols. Plays a role in the generation of resolution phase interaction products (resolvins) during both sterile and infectious inflammation. Metabolizes docosahexaenoate (DHA, C22:6(n-3)) to 17R-HDHA, a precursor of the D-series resolvins (RvDs). As a component of the biosynthetic pathway of E-series resolvins (RvEs), converts eicosapentaenoate (EPA, C20:5(n-3)) primarily to 18S-HEPE that is further metabolized by ALOX5 and LTA4H to generate 18S-RvE1 and 18S-RvE2. In vascular endothelial cells, converts docosapentaenoate (DPA, C22:5(n-3)) to 13R-HDPA, a precursor for 13-series resolvins (RvTs) shown to activate macrophage phagocytosis during bacterial infection. In activated leukocytes, contributes to oxygenation of hydroxyeicosatetraenoates (HETE) to diHETES (5,15-diHETE and 5,11-diHETE). Can also use linoleate (LA, (9Z,12Z)-octadecadienoate, C18:2(n-6)) as substrate and produce hydroxyoctadecadienoates (HODEs) in a regio- and stereospecific manner, being (9R)-HODE ((9R)-hydroxy-(10E,12Z)-octadecadienoate) and (13S)-HODE ((13S)-hydroxy-(9Z,11E)-octadecadienoate) its major products. During neuroinflammation, plays a role in neuronal secretion of specialized preresolving mediators (SPMs) 15R-lipoxin A4 that regulates phagocytic microglia. In Neovison vison (American mink), this protein is Prostaglandin G/H synthase 2 (PTGS2).